A 307-amino-acid polypeptide reads, in one-letter code: N-acetylmuramic acid 6-phosphate etherase (307 aa).

In terms of domain architecture, SIS spans 60-223; that stretch reads AAQAIARGGR…STGAMVRIGK (164 aa). Glu88 functions as the Proton donor in the catalytic mechanism. Residue Glu119 is part of the active site.

The protein belongs to the GCKR-like family. MurNAc-6-P etherase subfamily. As to quaternary structure, homodimer.

The enzyme catalyses N-acetyl-D-muramate 6-phosphate + H2O = N-acetyl-D-glucosamine 6-phosphate + (R)-lactate. It participates in amino-sugar metabolism; N-acetylmuramate degradation. Functionally, specifically catalyzes the cleavage of the D-lactyl ether substituent of MurNAc 6-phosphate, producing GlcNAc 6-phosphate and D-lactate. This chain is N-acetylmuramic acid 6-phosphate etherase, found in Synechococcus elongatus (strain ATCC 33912 / PCC 7942 / FACHB-805) (Anacystis nidulans R2).